We begin with the raw amino-acid sequence, 118 residues long: Large ribosomal subunit protein bL17 (118 aa).

Belongs to the bacterial ribosomal protein bL17 family. As to quaternary structure, part of the 50S ribosomal subunit. Contacts protein L32.

The chain is Large ribosomal subunit protein bL17 from Phytoplasma mali (strain AT).